The primary structure comprises 435 residues: UDP-glucuronic acid decarboxylase 1 (435 aa).

Positions Met-1–Pro-33 are disordered. Over Met-1–Arg-48 the chain is Cytoplasmic. A helical; Signal-anchor for type II membrane protein transmembrane segment spans residues Leu-49–Leu-69. Residues Ser-70–Leu-435 are Lumenal-facing. The span at Asp-91 to Asn-100 shows a compositional bias: polar residues. The disordered stretch occupies residues Asp-91–Arg-110. Gly-129, Phe-130, Val-131, Asp-150, Asn-151, Phe-153, Thr-154, Gly-155, Asp-175, and Val-176 together coordinate NAD(+). Ile-180 contributes to the UDP-alpha-D-glucuronate binding site. Leu-190 is an NAD(+) binding site. Position 208 (Lys-208) interacts with UDP-alpha-D-glucuronate. An NAD(+)-binding site is contributed by Thr-209. 4 residues coordinate UDP-alpha-D-glucuronate: Asn-216, Gly-219, Lys-222, and Arg-223. The NAD(+) site is built by Tyr-262 and Lys-266. Tyr-262 acts as the Proton acceptor in catalysis. UDP-alpha-D-glucuronate is bound at residue Tyr-276. Thr-292 and Arg-303 together coordinate NAD(+). The tract at residues Glu-380–Glu-401 is disordered. Residues Thr-385 to Glu-401 show a composition bias toward basic and acidic residues.

Belongs to the NAD(P)-dependent epimerase/dehydratase family. UDP-glucuronic acid decarboxylase subfamily. The cofactor is NAD(+). As to expression, ubiquitous.

It is found in the golgi apparatus. It localises to the golgi stack membrane. The catalysed reaction is UDP-alpha-D-glucuronate + H(+) = UDP-alpha-D-xylose + CO2. The protein operates within nucleotide-sugar biosynthesis; UDP-alpha-D-xylose biosynthesis; UDP-alpha-D-xylose from UDP-alpha-D-glucuronate: step 1/1. In terms of biological role, catalyzes the NAD-dependent decarboxylation of UDP-glucuronic acid to UDP-xylose. Necessary for the biosynthesis of the core tetrasaccharide in glycosaminoglycan biosynthesis. This chain is UDP-glucuronic acid decarboxylase 1, found in Arabidopsis thaliana (Mouse-ear cress).